Here is a 213-residue protein sequence, read N- to C-terminus: Ribosomal RNA large subunit methyltransferase E (213 aa).

Residues G59, F61, D79, D97, and D121 each contribute to the S-adenosyl-L-methionine site. The Proton acceptor role is filled by K161.

Belongs to the class I-like SAM-binding methyltransferase superfamily. RNA methyltransferase RlmE family.

It localises to the cytoplasm. It catalyses the reaction uridine(2552) in 23S rRNA + S-adenosyl-L-methionine = 2'-O-methyluridine(2552) in 23S rRNA + S-adenosyl-L-homocysteine + H(+). Its function is as follows. Specifically methylates the uridine in position 2552 of 23S rRNA at the 2'-O position of the ribose in the fully assembled 50S ribosomal subunit. This Myxococcus xanthus (strain DK1622) protein is Ribosomal RNA large subunit methyltransferase E.